We begin with the raw amino-acid sequence, 152 residues long: Large ribosomal subunit protein bL9 (152 aa).

Belongs to the bacterial ribosomal protein bL9 family.

Its function is as follows. Binds to the 23S rRNA. This chain is Large ribosomal subunit protein bL9, found in Mycobacterium leprae (strain Br4923).